The following is an 88-amino-acid chain: Small ribosomal subunit protein bS20 (88 aa).

The protein belongs to the bacterial ribosomal protein bS20 family.

Functionally, binds directly to 16S ribosomal RNA. In Mycoplasmopsis synoviae (strain 53) (Mycoplasma synoviae), this protein is Small ribosomal subunit protein bS20.